The sequence spans 283 residues: MQIITDPIQMQAIAEKLRLNRQLIGVVMTMGALHEGHLSLIKEARKIAGTIILTIFVNPRQFAPHEDFHRYPRPFEQDAAHAKAAEVDYVFAPPVDAMYTGNFQTTVHPGPLGEQFEGKQRPGHFSGVATIVTKLLQITRPHIAVFGEKDAQQLAVIKQLVKDLNIDVRIIEAPIIRDENGLAVSSRNIYLSAKERDAATVLYKGLCHAERRIAEPCLDLDAIVPEVENIIKSALSCHPEYICFVDDETFLPASKAEKGKTYRLLLAVQAGTVRLIDNRKFMV.

An ATP-binding site is contributed by 30–37; the sequence is MGALHEGH. The active-site Proton donor is H37. Q61 serves as a coordination point for (R)-pantoate. Q61 is a binding site for beta-alanine. 147 to 150 is an ATP binding site; that stretch reads GEKD. Q153 contributes to the (R)-pantoate binding site. ATP is bound by residues I176 and 184–187; that span reads VSSR.

Belongs to the pantothenate synthetase family. In terms of assembly, homodimer.

Its subcellular location is the cytoplasm. The enzyme catalyses (R)-pantoate + beta-alanine + ATP = (R)-pantothenate + AMP + diphosphate + H(+). It participates in cofactor biosynthesis; (R)-pantothenate biosynthesis; (R)-pantothenate from (R)-pantoate and beta-alanine: step 1/1. Functionally, catalyzes the condensation of pantoate with beta-alanine in an ATP-dependent reaction via a pantoyl-adenylate intermediate. This is Pantothenate synthetase from Chlorobium phaeobacteroides (strain DSM 266 / SMG 266 / 2430).